A 334-amino-acid chain; its full sequence is Protein-methionine-sulfoxide reductase catalytic subunit MsrP (334 aa).

The segment at residues 1 to 44 (MKKNQFLKESDVTAESVFFMKRRQVLKALGISAAALSLPHAAHA) is a signal peptide (tat-type signal). Mo-molybdopterin-binding positions include N88, 91 to 92 (YE), C146, T181, N233, R238, and 249 to 251 (GIK).

This sequence belongs to the MsrP family. In terms of assembly, heterodimer of a catalytic subunit (MsrP) and a heme-binding subunit (MsrQ). It depends on Mo-molybdopterin as a cofactor. In terms of processing, predicted to be exported by the Tat system. The position of the signal peptide cleavage has not been experimentally proven.

The protein localises to the periplasm. The enzyme catalyses L-methionyl-[protein] + a quinone + H2O = L-methionyl-(S)-S-oxide-[protein] + a quinol. The catalysed reaction is L-methionyl-[protein] + a quinone + H2O = L-methionyl-(R)-S-oxide-[protein] + a quinol. Functionally, part of the MsrPQ system that repairs oxidized periplasmic proteins containing methionine sulfoxide residues (Met-O), using respiratory chain electrons. Thus protects these proteins from oxidative-stress damage caused by reactive species of oxygen and chlorine generated by the host defense mechanisms. MsrPQ is essential for the maintenance of envelope integrity under bleach stress, rescuing a wide series of structurally unrelated periplasmic proteins from methionine oxidation, including the primary periplasmic chaperone SurA and the lipoprotein Pal. The catalytic subunit MsrP is non-stereospecific, being able to reduce both (R-) and (S-) diastereoisomers of methionine sulfoxide. The sequence is that of Protein-methionine-sulfoxide reductase catalytic subunit MsrP from Shigella sonnei (strain Ss046).